Consider the following 491-residue polypeptide: Trigger factor (491 aa).

The region spanning 173-260 (GDVAVVSFSG…LDELKGRELP (88 aa)) is the PPIase FKBP-type domain. Residues 435 to 491 (MVDPASEDKPAKASKAKSSKAKAEKEPAAEGQAKAKPAAKTSKSKTKAAEKLITPID) form a disordered region. The segment covering 463-475 (AEGQAKAKPAAKT) has biased composition (low complexity).

The protein belongs to the FKBP-type PPIase family. Tig subfamily.

The protein resides in the cytoplasm. The enzyme catalyses [protein]-peptidylproline (omega=180) = [protein]-peptidylproline (omega=0). In terms of biological role, involved in protein export. Acts as a chaperone by maintaining the newly synthesized protein in an open conformation. Functions as a peptidyl-prolyl cis-trans isomerase. The protein is Trigger factor of Synechococcus sp. (strain RCC307).